Consider the following 138-residue polypeptide: Large ribosomal subunit protein uL11c (138 aa).

Belongs to the universal ribosomal protein uL11 family. In terms of assembly, part of the ribosomal stalk of the 50S ribosomal subunit. Interacts with L10 and the large rRNA to form the base of the stalk. L10 forms an elongated spine to which L12 dimers bind in a sequential fashion forming a multimeric L10(L12)X complex.

It localises to the plastid. It is found in the chloroplast. Forms part of the ribosomal stalk which helps the ribosome interact with GTP-bound translation factors. The sequence is that of Large ribosomal subunit protein uL11c from Cyanidioschyzon merolae (strain NIES-3377 / 10D) (Unicellular red alga).